A 267-amino-acid chain; its full sequence is Outer membrane protein assembly factor BamD (267 aa).

An N-terminal signal peptide occupies residues 1 to 16; that stretch reads MKKILLTVSLGLALSA. C17 is lipidated: N-palmitoyl cysteine. C17 carries the S-diacylglycerol cysteine lipid modification.

The protein belongs to the BamD family. As to quaternary structure, part of the Bam complex.

The protein localises to the cell outer membrane. Part of the outer membrane protein assembly complex, which is involved in assembly and insertion of beta-barrel proteins into the outer membrane. Required for efficient transformation of Neisseria gonorrhoeae by species-related DNA. This chain is Outer membrane protein assembly factor BamD, found in Neisseria gonorrhoeae.